The sequence spans 323 residues: Chitinase 1 (323 aa).

Positions 1–20 (MRALAVVVVATAFAVVAVRG) are cleaved as a signal peptide. The region spanning 21-61 (EQCGSQAGGALCPNCLCCSQYGWCGSTSAYCGSGCQSQCSG) is the Chitin-binding type-1 domain. 8 cysteine pairs are disulfide-bonded: Cys-23/Cys-38, Cys-32/Cys-44, Cys-35/Cys-63, Cys-37/Cys-51, Cys-55/Cys-59, Cys-100/Cys-162, Cys-176/Cys-184, and Cys-283/Cys-315. The Proton donor role is filled by Glu-144.

This sequence belongs to the glycosyl hydrolase 19 family. Chitinase class I subfamily. Expressed in roots, leaves, sheaths and meristems.

It carries out the reaction Random endo-hydrolysis of N-acetyl-beta-D-glucosaminide (1-&gt;4)-beta-linkages in chitin and chitodextrins.. Functionally, hydrolyzes chitin and may play a role in defense against fungal pathogens containing chitin. The protein is Chitinase 1 (Cht1) of Oryza sativa subsp. japonica (Rice).